A 503-amino-acid polypeptide reads, in one-letter code: Glutamate--tRNA ligase (503 aa).

The short motif at proline 12–glycine 22 is the 'HIGH' region element. The 'KMSKS' region signature appears at lysine 259–arginine 263. Position 262 (lysine 262) interacts with ATP.

This sequence belongs to the class-I aminoacyl-tRNA synthetase family. Glutamate--tRNA ligase type 1 subfamily. Monomer.

It is found in the cytoplasm. It carries out the reaction tRNA(Glu) + L-glutamate + ATP = L-glutamyl-tRNA(Glu) + AMP + diphosphate. Its function is as follows. Catalyzes the attachment of glutamate to tRNA(Glu) in a two-step reaction: glutamate is first activated by ATP to form Glu-AMP and then transferred to the acceptor end of tRNA(Glu). The chain is Glutamate--tRNA ligase from Chloroherpeton thalassium (strain ATCC 35110 / GB-78).